Consider the following 466-residue polypeptide: GTPase Der (466 aa).

EngA-type G domains follow at residues 3 to 166 (PVIA…PEIP) and 177 to 350 (IKIA…QSAT). Residues 9–16 (GRPNVGKS), 56–60 (DTGGI), 118–121 (NKID), 183–190 (GRPNVGKS), 230–234 (DTAGV), and 295–298 (NKWD) contribute to the GTP site. The region spanning 351-435 (DRFSTNYLTR…PIRIEFRTTD (85 aa)) is the KH-like domain. Residues 442 to 466 (KKSMTRQQFIQKRRKEERDRNNPRR) are disordered. The segment covering 455–466 (RKEERDRNNPRR) has biased composition (basic and acidic residues).

Belongs to the TRAFAC class TrmE-Era-EngA-EngB-Septin-like GTPase superfamily. EngA (Der) GTPase family. In terms of assembly, associates with the 50S ribosomal subunit.

Its function is as follows. GTPase that plays an essential role in the late steps of ribosome biogenesis. In Cellvibrio japonicus (strain Ueda107) (Pseudomonas fluorescens subsp. cellulosa), this protein is GTPase Der.